Here is a 414-residue protein sequence, read N- to C-terminus: CCA-adding enzyme (414 aa).

G8 and R11 together coordinate ATP. Residues G8 and R11 each coordinate CTP. D21 and D23 together coordinate Mg(2+). Residues R91, R137, and R140 each contribute to the ATP site. The CTP site is built by R91, R137, and R140.

The protein belongs to the tRNA nucleotidyltransferase/poly(A) polymerase family. Bacterial CCA-adding enzyme type 2 subfamily. It depends on Mg(2+) as a cofactor.

It catalyses the reaction a tRNA precursor + 2 CTP + ATP = a tRNA with a 3' CCA end + 3 diphosphate. The enzyme catalyses a tRNA with a 3' CCA end + 2 CTP + ATP = a tRNA with a 3' CCACCA end + 3 diphosphate. Catalyzes the addition and repair of the essential 3'-terminal CCA sequence in tRNAs without using a nucleic acid template. Adds these three nucleotides in the order of C, C, and A to the tRNA nucleotide-73, using CTP and ATP as substrates and producing inorganic pyrophosphate. tRNA 3'-terminal CCA addition is required both for tRNA processing and repair. Also involved in tRNA surveillance by mediating tandem CCA addition to generate a CCACCA at the 3' terminus of unstable tRNAs. While stable tRNAs receive only 3'-terminal CCA, unstable tRNAs are marked with CCACCA and rapidly degraded. This chain is CCA-adding enzyme, found in Buchnera aphidicola subsp. Acyrthosiphon pisum (strain 5A).